Here is a 165-residue protein sequence, read N- to C-terminus: Small ribosomal subunit protein uS5 (165 aa).

An S5 DRBM domain is found at 10–73; it reads LKEKVVHINR…EDAKKNIVEV (64 aa).

This sequence belongs to the universal ribosomal protein uS5 family. Part of the 30S ribosomal subunit. Contacts proteins S4 and S8.

In terms of biological role, with S4 and S12 plays an important role in translational accuracy. Functionally, located at the back of the 30S subunit body where it stabilizes the conformation of the head with respect to the body. The sequence is that of Small ribosomal subunit protein uS5 from Clostridium botulinum (strain ATCC 19397 / Type A).